Reading from the N-terminus, the 507-residue chain is Protein DETOXIFICATION 39 (507 aa).

12 consecutive transmembrane segments (helical) span residues 58–78 (VLFRLALPAILIYLVNSGMGI), 92–112 (LAAASIGNSCFNLVYGLMLGM), 141–161 (IVLALVGLPMTLLYTFSYPIL), 178–198 (IAGLIPQIFAYAVNFTAQKFL), 209–229 (FISAAALILQILLTWITVYVM), 233–253 (FMGIAYVLTISWWVIVGSQCF), 287–307 (AVMICLEMWYSQILVLLAGLL), 318–338 (SICMSISALSFMVSVGFNAAV), 359–379 (WTATFVSFVISVTEALAVIWF), 403–423 (FLAITIILNGIQPVLSGVAVG), 433–453 (VNVGCYYVVGIPVGCILGFTF), and 459–479 (GIWTGMIGGTLMQTLILLYVT).

The protein belongs to the multi antimicrobial extrusion (MATE) (TC 2.A.66.1) family.

It is found in the membrane. This is Protein DETOXIFICATION 39 from Arabidopsis thaliana (Mouse-ear cress).